Here is a 941-residue protein sequence, read N- to C-terminus: Pre-mRNA-processing factor 6 (941 aa).

The segment at 1–79 (MNKKKKPFLG…DEDLNDTNYD (79 aa)) is disordered. Residues 39–65 (DANDPVDDRHAPPGKRTVGDQMKKNQA) show a composition bias toward basic and acidic residues. Over residues 66–78 (ADDDDEDLNDTNY) the composition is skewed to acidic residues. The residue at position 143 (Ser143) is a Phosphoserine. Thr180, Thr266, and Thr275 each carry phosphothreonine. Ser279 carries the post-translational modification Phosphoserine. 9 HAT repeats span residues 384 to 416 (TDIR…LEEP), 418 to 444 (DARI…ARLE), 445 to 476 (TYEN…LEEA), 554 to 586 (NALE…FEKN), 588 to 620 (GTRE…SKWL), 622 to 654 (GDVP…LESE), 689 to 721 (DNIR…IEEQ), 723 to 755 (EMME…LEEK), and 855 to 887 (RKIT…FELQ).

Identified in the spliceosome B complex. Identified in the spliceosome C complex. Associates with the U5 snRNP particle. Component of the U4/U6-U5 tri-snRNP complex composed of the U4, U6 and U5 snRNAs and at least PRPF3, PRPF4, PRPF6, PRPF8, PRPF31, SNRNP200, TXNL4A, SNRNP40, DDX23, CD2BP2, PPIH, SNU13, EFTUD2, SART1 and USP39, LSm proteins LSm2-8 and Sm proteins. Interacts with ARAF. Interacts with AR and NR3C1, but not ESR1, independently of the presence of hormones. Interacts with USH1G. Post-translationally, phosphorylated by PRP4K during spliceosome assembly. Widely expressed.

Its subcellular location is the nucleus. It is found in the nucleoplasm. The protein resides in the nucleus speckle. Functionally, involved in pre-mRNA splicing as component of the U4/U6-U5 tri-snRNP complex, one of the building blocks of the spliceosome. Enhances dihydrotestosterone-induced transactivation activity of AR, as well as dexamethasone-induced transactivation activity of NR3C1, but does not affect estrogen-induced transactivation. The polypeptide is Pre-mRNA-processing factor 6 (Homo sapiens (Human)).